The primary structure comprises 217 residues: Phosphate-specific transport system accessory protein PhoU homolog 2 (217 aa).

The protein belongs to the PhoU family. Homodimer.

Its subcellular location is the cytoplasm. Plays a role in the regulation of phosphate uptake. This Methanothermobacter thermautotrophicus (strain ATCC 29096 / DSM 1053 / JCM 10044 / NBRC 100330 / Delta H) (Methanobacterium thermoautotrophicum) protein is Phosphate-specific transport system accessory protein PhoU homolog 2.